Here is a 202-residue protein sequence, read N- to C-terminus: Small ribosomal subunit protein uS4 (202 aa).

The interval 16–43 (GELPGLSRKTPRRAYPPGQHGQGRRKRS) is disordered. The region spanning 90–152 (MRLDNTVFRL…DNSRRMVETN (63 aa)) is the S4 RNA-binding domain.

It belongs to the universal ribosomal protein uS4 family. Part of the 30S ribosomal subunit. Contacts protein S5. The interaction surface between S4 and S5 is involved in control of translational fidelity.

One of the primary rRNA binding proteins, it binds directly to 16S rRNA where it nucleates assembly of the body of the 30S subunit. In terms of biological role, with S5 and S12 plays an important role in translational accuracy. The polypeptide is Small ribosomal subunit protein uS4 (Crocosphaera subtropica (strain ATCC 51142 / BH68) (Cyanothece sp. (strain ATCC 51142))).